Here is a 66-residue protein sequence, read N- to C-terminus: Large ribosomal subunit protein bL35 (66 aa).

Belongs to the bacterial ribosomal protein bL35 family.

This is Large ribosomal subunit protein bL35 from Caulobacter vibrioides (strain ATCC 19089 / CIP 103742 / CB 15) (Caulobacter crescentus).